We begin with the raw amino-acid sequence, 116 residues long: NADH-ubiquinone oxidoreductase chain 3 (116 aa).

A run of 3 helical transmembrane segments spans residues Phe6–Ala26, Phe56–Leu76, and Pro85–Tyr105.

Belongs to the complex I subunit 3 family.

It localises to the mitochondrion membrane. It carries out the reaction a ubiquinone + NADH + 5 H(+)(in) = a ubiquinol + NAD(+) + 4 H(+)(out). Functionally, core subunit of the mitochondrial membrane respiratory chain NADH dehydrogenase (Complex I) that is believed to belong to the minimal assembly required for catalysis. Complex I functions in the transfer of electrons from NADH to the respiratory chain. The immediate electron acceptor for the enzyme is believed to be ubiquinone. The polypeptide is NADH-ubiquinone oxidoreductase chain 3 (MT-ND3) (Struthio camelus (Common ostrich)).